A 922-amino-acid chain; its full sequence is Pyruvate dehydrogenase E1 component (922 aa).

In terms of assembly, homodimer. Part of an unusual ODH/PDH supercomplex, consisting of AceE (E1), AceF (E2), and Lpd (E3) together with OdhA (E1+E2). Requires Mg(2+) as cofactor. It depends on thiamine diphosphate as a cofactor.

It carries out the reaction N(6)-[(R)-lipoyl]-L-lysyl-[protein] + pyruvate + H(+) = N(6)-[(R)-S(8)-acetyldihydrolipoyl]-L-lysyl-[protein] + CO2. In terms of biological role, is a specific component of the pyruvate dehydrogenase (PDH) complex, that catalyzes the overall conversion of pyruvate to acetyl-CoA and CO(2). AceE has reductase activity with pyruvate but does not react with 2-oxoglutarate. This chain is Pyruvate dehydrogenase E1 component (aceE), found in Corynebacterium glutamicum (strain ATCC 13032 / DSM 20300 / JCM 1318 / BCRC 11384 / CCUG 27702 / LMG 3730 / NBRC 12168 / NCIMB 10025 / NRRL B-2784 / 534).